Consider the following 140-residue polypeptide: Ubiquitin-like protein ATG12 (140 aa).

Positions 1-52 are disordered; that stretch reads MAEEPQTVLQLPPSSAAGGEGLTDVSPETTTPEPPSSAAVSPGTEEPAGDTK. A compositionally biased stretch (low complexity) spans 25-42; sequence VSPETTTPEPPSSAAVSP. Gly140 is covalently cross-linked (Glycyl lysine isopeptide (Gly-Lys) (interchain with K-? in acceptor protein)).

It belongs to the ATG12 family. Forms a conjugate with ATG5. Part of the minor complex composed of 4 sets of ATG12-ATG5 and ATG16L1 (400 kDa); this complex interacts with ATG3 leading to disruption of ATG7 interaction and promotion of ATG8-like proteins lipidation. Forms an 800-kDa complex composed of ATG12-ATG5 and ATG16L2. Interacts with DHX58/RIG-1, IFIH1/MDA5 and MAVS/IPS-1 in monomeric form as well as in ATG12-ATG5 conjugate. The interaction with MAVS is further enhanced upon vesicular stomatitis virus (VSV) infection. Interacts with ATG3; this interaction is essential for phosphatidylethanolamine (PE)-conjugated ATG8-like proteins formation. Interacts with ATG7. Interacts with ATG10. Interacts with TECPR1. Interacts with SH3BGRL. The ATG12-ATG5 conjugate interacts with PDCD6IP (via the BRO1 domain); this interaction is bridged by ATG12 and promotes multiple PDCD6IP-mediated functions such as endolysosomal trafficking, macroautophagy and exosome biogenesis. In terms of processing, acetylated by EP300.

The protein resides in the cytoplasm. Its subcellular location is the preautophagosomal structure membrane. Ubiquitin-like protein involved in autophagy vesicles formation. Conjugation with ATG5 through a ubiquitin-like conjugating system involving also ATG7 as an E1-like activating enzyme and ATG10 as an E2-like conjugating enzyme, is essential for its function. The ATG12-ATG5 conjugate acts as an E3-like enzyme which is required for lipidation of ATG8 family proteins and their association to the vesicle membranes. The ATG12-ATG5 conjugate also negatively regulates the innate antiviral immune response by blocking the type I IFN production pathway through direct association with RARRES3 and MAVS. Also plays a role in translation or delivery of incoming viral RNA to the translation apparatus. As part of the ATG8 conjugation system with ATG5 and ATG16L1, required for recruitment of LRRK2 to stressed lysosomes and induction of LRRK2 kinase activity in response to lysosomal stress. This chain is Ubiquitin-like protein ATG12, found in Pongo abelii (Sumatran orangutan).